Reading from the N-terminus, the 370-residue chain is MIPGNDPILLTPGPLTTSPATRHAMLRDWGSWDAAFNRMTQSVCTDLIEIVHGENEYVCVPLQGSGTFAVEAALGTLVPRDGRVLVPNNGAYCARIVKVLQRLGIAHVELPLREDAPVTAAAIEDAFNRDPRITHVAQVHLETSAGLLNPLDEIAAVCKHYGKSLIVDAMSSFGALPIDLRRGGIDALVSASGKCLEGVPGMGFVIVRRSALEACEGRSPSLALDLYDQFAYMQKTTQWRFTPPTHVLAALRTALDQFIAEGGQPARGARYARNCAALVDGMKALGFETFLTADVQAPVIVTFHAPRDPKWQFAEFYAAVREAGYVLYPGKLTQVETFRVGCIGSIGTNEMHDAVAAIGRTLIRLGIRVK.

Lys-194 is subject to N6-(pyridoxal phosphate)lysine.

It belongs to the class-V pyridoxal-phosphate-dependent aminotransferase family. PhnW subfamily. In terms of assembly, homodimer. It depends on pyridoxal 5'-phosphate as a cofactor.

The catalysed reaction is (2-aminoethyl)phosphonate + pyruvate = phosphonoacetaldehyde + L-alanine. Its function is as follows. Involved in phosphonate degradation. In Paraburkholderia phymatum (strain DSM 17167 / CIP 108236 / LMG 21445 / STM815) (Burkholderia phymatum), this protein is 2-aminoethylphosphonate--pyruvate transaminase.